Consider the following 92-residue polypeptide: Alpha-conotoxin-like Mi20.2 (92 aa).

An N-terminal signal peptide occupies residues 1–24; it reads MPKLEMMLLVLLILPLSSFSAAGE. A propeptide spanning residues 25 to 45 is cleaved from the precursor; that stretch reads QVVQGDQRSDGLARYLQRGGR. Glu49 is modified (4-carboxyglutamate). A 4-hydroxyproline modification is found at Pro55. Cystine bridges form between Cys63/Cys72, Cys68/Cys80, Cys73/Cys90, and Cys78/Cys92.

Belongs to the conotoxin D superfamily. Hetero-, homo- or pseudo-homodimer (identical sequence, different post-translational modifications). As to expression, expressed by the venom duct.

It is found in the secreted. Functionally, alpha-conotoxins act on postsynaptic membranes, they bind to the nicotinic acetylcholine receptors (nAChR) and thus inhibit them. Through its two C-terminal domains, this homodimeric protein would bind to two nAChR allosteric sites, located outside the nAChR C-loop of the principal binding face and at the adjacent binding interface in a clockwise direction. This toxin specifically blocks mammalian neuronal nAChR of the alpha-7/CHRNA7, alpha-3-beta-2/CHRNA3-CHRNB2 and alpha-4-beta-2/CHRNA4-CHRNB2 subtypes. The sequence is that of Alpha-conotoxin-like Mi20.2 from Conus miles (Soldier cone).